We begin with the raw amino-acid sequence, 395 residues long: Flap endonuclease 1 (395 aa).

The interval 1-104 is N-domain; it reads MGIKHLYQII…GELAKRFMRK (104 aa). Asp-34 serves as a coordination point for Mg(2+). Residues Arg-47 and Arg-70 each coordinate DNA. Mg(2+)-binding residues include Asp-86, Glu-158, Glu-160, Asp-179, and Asp-181. Residues 122-253 form an I-domain region; that stretch reads EVEKFSRRTV…NTALKLIRDH (132 aa). Glu-158 contacts DNA. 2 residues coordinate DNA: Gly-231 and Asp-233. Position 233 (Asp-233) interacts with Mg(2+). The tract at residues 341 to 349 is interaction with PCNA; it reads QQSRLEGFF. A compositionally biased stretch (basic and acidic residues) spans 360 to 389; that stretch reads AVLKRKHEEKLELQKKKKKEDAKAKKEAKS. Residues 360–395 form a disordered region; it reads AVLKRKHEEKLELQKKKKKEDAKAKKEAKSKPRGTT.

Belongs to the XPG/RAD2 endonuclease family. FEN1 subfamily. As to quaternary structure, interacts with PCNA. Three molecules of FEN1 bind to one PCNA trimer with each molecule binding to one PCNA monomer. PCNA stimulates the nuclease activity without altering cleavage specificity. Requires Mg(2+) as cofactor. Post-translationally, phosphorylated. Phosphorylation upon DNA damage induces relocalization to the nuclear plasma.

It is found in the nucleus. Its subcellular location is the nucleolus. The protein resides in the nucleoplasm. The protein localises to the mitochondrion. Structure-specific nuclease with 5'-flap endonuclease and 5'-3' exonuclease activities involved in DNA replication and repair. During DNA replication, cleaves the 5'-overhanging flap structure that is generated by displacement synthesis when DNA polymerase encounters the 5'-end of a downstream Okazaki fragment. It enters the flap from the 5'-end and then tracks to cleave the flap base, leaving a nick for ligation. Also involved in the long patch base excision repair (LP-BER) pathway, by cleaving within the apurinic/apyrimidinic (AP) site-terminated flap. Acts as a genome stabilization factor that prevents flaps from equilibrating into structures that lead to duplications and deletions. Also possesses 5'-3' exonuclease activity on nicked or gapped double-stranded DNA, and exhibits RNase H activity. Also involved in replication and repair of rDNA and in repairing mitochondrial DNA. This chain is Flap endonuclease 1, found in Ajellomyces capsulatus (strain NAm1 / WU24) (Darling's disease fungus).